Reading from the N-terminus, the 121-residue chain is Holo-[acyl-carrier-protein] synthase (121 aa).

Residues Asp-8 and Glu-55 each coordinate Mg(2+).

Belongs to the P-Pant transferase superfamily. AcpS family. Mg(2+) is required as a cofactor.

The protein localises to the cytoplasm. It catalyses the reaction apo-[ACP] + CoA = holo-[ACP] + adenosine 3',5'-bisphosphate + H(+). Its function is as follows. Transfers the 4'-phosphopantetheine moiety from coenzyme A to a Ser of acyl-carrier-protein. This chain is Holo-[acyl-carrier-protein] synthase, found in Caldicellulosiruptor bescii (strain ATCC BAA-1888 / DSM 6725 / KCTC 15123 / Z-1320) (Anaerocellum thermophilum).